A 263-amino-acid polypeptide reads, in one-letter code: Type II restriction enzyme TthHB8I (263 aa).

It catalyses the reaction Endonucleolytic cleavage of DNA to give specific double-stranded fragments with terminal 5'-phosphates.. Functionally, a P subtype restriction enzyme that recognizes the double-stranded sequence 5'-TCGA-3' and cleaves after T-1. This Thermus thermophilus (strain ATCC 27634 / DSM 579 / HB8) protein is Type II restriction enzyme TthHB8I (tthHB8IR).